The following is a 154-amino-acid chain: 3-dehydroquinate dehydratase (154 aa).

Catalysis depends on Y23, which acts as the Proton acceptor. Residues N75, H81, and D88 each coordinate substrate. Catalysis depends on H101, which acts as the Proton donor. Residues 102–103 (LS) and R112 contribute to the substrate site.

This sequence belongs to the type-II 3-dehydroquinase family. As to quaternary structure, homododecamer.

It catalyses the reaction 3-dehydroquinate = 3-dehydroshikimate + H2O. The protein operates within metabolic intermediate biosynthesis; chorismate biosynthesis; chorismate from D-erythrose 4-phosphate and phosphoenolpyruvate: step 3/7. In terms of biological role, catalyzes a trans-dehydration via an enolate intermediate. The polypeptide is 3-dehydroquinate dehydratase (Teredinibacter turnerae (strain ATCC 39867 / T7901)).